We begin with the raw amino-acid sequence, 351 residues long: Outer membrane porin PhoE (351 aa).

The N-terminal stretch at 1 to 21 (MKKSTLALVVMGIVASASVQA) is a signal peptide.

It belongs to the Gram-negative porin family. As to quaternary structure, homotrimer. Forms mixed heterotrimers with OmpC and with OmpF; other mixed heterotrimers are also probable.

It is found in the cell outer membrane. Uptake of inorganic phosphate, phosphorylated compounds, and some other negatively charged solutes. The protein is Outer membrane porin PhoE (phoE) of Escherichia coli (strain K12).